Consider the following 141-residue polypeptide: Relaxin-3 (141 aa).

An N-terminal signal peptide occupies residues methionine 1 to alanine 24. 3 cysteine pairs are disulfide-bonded: cysteine 34–cysteine 128, cysteine 46–cysteine 141, and cysteine 127–cysteine 132. The propeptide at alanine 54–arginine 117 is connecting peptide.

Belongs to the insulin family. As to quaternary structure, heterodimer of a B chain and an A chain linked by two disulfide bonds. High expression in the brain localized to the pons/medulla with highest levels in pars ventromedialis of the dorsal tegmental nucleus. Significant expression is also detected in the spleen, thymus, lung, testis and ovary.

The protein resides in the secreted. Functionally, may play a role in neuropeptide signaling processes. Ligand for LGR7, relaxin-3 receptor-1 and relaxin-3 receptor-2. This Mus musculus (Mouse) protein is Relaxin-3 (Rln3).